Reading from the N-terminus, the 230-residue chain is Translation initiation factor IF-3 (230 aa).

Disordered stretches follow at residues 1–21 (MAIQ…RTNR) and 184–230 (LQSQ…AAQR). A compositionally biased stretch (low complexity) spans 193 to 208 (AAAAAAPAAAPAAGAP). Residues 209-220 (APAPAPAAPAPA) show a composition bias toward pro residues. Over residues 221-230 (PTAADPAAQR) the composition is skewed to low complexity.

It belongs to the IF-3 family. In terms of assembly, monomer.

Its subcellular location is the cytoplasm. In terms of biological role, IF-3 binds to the 30S ribosomal subunit and shifts the equilibrium between 70S ribosomes and their 50S and 30S subunits in favor of the free subunits, thus enhancing the availability of 30S subunits on which protein synthesis initiation begins. The protein is Translation initiation factor IF-3 of Anaeromyxobacter dehalogenans (strain 2CP-1 / ATCC BAA-258).